The sequence spans 169 residues: Large ribosomal subunit protein uL10 (169 aa).

This sequence belongs to the universal ribosomal protein uL10 family. As to quaternary structure, part of the ribosomal stalk of the 50S ribosomal subunit. The N-terminus interacts with L11 and the large rRNA to form the base of the stalk. The C-terminus forms an elongated spine to which L12 dimers bind in a sequential fashion forming a multimeric L10(L12)X complex.

In terms of biological role, forms part of the ribosomal stalk, playing a central role in the interaction of the ribosome with GTP-bound translation factors. The sequence is that of Large ribosomal subunit protein uL10 from Lactobacillus delbrueckii subsp. bulgaricus (strain ATCC 11842 / DSM 20081 / BCRC 10696 / JCM 1002 / NBRC 13953 / NCIMB 11778 / NCTC 12712 / WDCM 00102 / Lb 14).